We begin with the raw amino-acid sequence, 111 residues long: Disintegrin acostatin-alpha (111 aa).

The signal sequence occupies residues Met-1–Ser-20. Positions Ile-21–Ala-46 are excised as a propeptide. The Disintegrin domain occupies Ile-47–Ala-111. The residue at position 48 (Gln-48) is a Pyrrolidone carboxylic acid; in Disintegrin acostatin-alpha, processed form. 4 disulfide bridges follow: Cys-53/Cys-76, Cys-67/Cys-73, Cys-72/Cys-97, and Cys-85/Cys-104. The Cell attachment site signature appears at Arg-89–Asp-91. Residues Tyr-110–Ala-111 constitute a propeptide that is removed on maturation.

The protein belongs to the disintegrin family. Dimeric disintegrin subfamily. As to quaternary structure, heterodimer with subunit beta; disulfide-linked. In terms of tissue distribution, expressed by the venom gland.

The protein resides in the secreted. Inhibits fibrinogen interaction with platelets. Acts by binding to alpha-IIb/beta-3 (ITGA2B/ITGB3) on the platelet surface and inhibits ADP-induced platelet aggregation in human platelet-rich plasma. The polypeptide is Disintegrin acostatin-alpha (Agkistrodon contortrix contortrix (Southern copperhead)).